Here is a 920-residue protein sequence, read N- to C-terminus: Probable helicase HelY (920 aa).

Residues 26-184 (CAALERGHGV…WVQTVRGDTT (159 aa)) form the Helicase ATP-binding domain. Residue 39-46 (APTGAGKT) coordinates ATP. A DEVH box motif is present at residues 132–135 (DEVH). The 205-residue stretch at 265-469 (EVIAILDAEG…SYNMTINLVH (205 aa)) folds into the Helicase C-terminal domain.

It belongs to the helicase family. SKI2 subfamily.

The chain is Probable helicase HelY (helY) from Mycobacterium leprae (strain TN).